A 66-amino-acid polypeptide reads, in one-letter code: Large ribosomal subunit protein uL30 (66 aa).

Belongs to the universal ribosomal protein uL30 family. Part of the 50S ribosomal subunit.

The protein is Large ribosomal subunit protein uL30 of Chelativorans sp. (strain BNC1).